Consider the following 164-residue polypeptide: Ubiquitin-fold modifier-conjugating enzyme 1 (164 aa).

The active-site Glycyl thioester intermediate is the cysteine 116.

Belongs to the ubiquitin-conjugating enzyme family. UFC1 subfamily.

Functionally, E2-like enzyme which forms an intermediate with UFM1 via a thioester linkage. In Drosophila ananassae (Fruit fly), this protein is Ubiquitin-fold modifier-conjugating enzyme 1.